The primary structure comprises 303 residues: Aliphatic sulfonates import ATP-binding protein SsuB (303 aa).

The 225-residue stretch at 39 to 263 folds into the ABC transporter domain; sequence LHVRQVVKRY…ERGAAGFAQL (225 aa). 71–78 lines the ATP pocket; that stretch reads GRSGCGKS.

The protein belongs to the ABC transporter superfamily. Aliphatic sulfonates importer (TC 3.A.1.17.2) family. The complex is composed of two ATP-binding proteins (SsuB), two transmembrane proteins (SsuC) and a solute-binding protein (SsuA).

The protein localises to the cell inner membrane. It catalyses the reaction ATP + H2O + aliphatic sulfonate-[sulfonate-binding protein]Side 1 = ADP + phosphate + aliphatic sulfonateSide 2 + [sulfonate-binding protein]Side 1.. Part of the ABC transporter complex SsuABC involved in aliphatic sulfonates import. Responsible for energy coupling to the transport system. In Cupriavidus necator (strain ATCC 17699 / DSM 428 / KCTC 22496 / NCIMB 10442 / H16 / Stanier 337) (Ralstonia eutropha), this protein is Aliphatic sulfonates import ATP-binding protein SsuB.